A 472-amino-acid polypeptide reads, in one-letter code: Trigger factor (472 aa).

Positions Gly-172–Gln-257 constitute a PPIase FKBP-type domain. 2 stretches are compositionally biased toward polar residues: residues Asn-439–Ser-449 and Lys-461–Lys-472. Positions Asn-439 to Lys-472 are disordered.

The protein belongs to the FKBP-type PPIase family. Tig subfamily.

The protein localises to the cytoplasm. The enzyme catalyses [protein]-peptidylproline (omega=180) = [protein]-peptidylproline (omega=0). Its function is as follows. Involved in protein export. Acts as a chaperone by maintaining the newly synthesized protein in an open conformation. Functions as a peptidyl-prolyl cis-trans isomerase. In Ureaplasma urealyticum serovar 10 (strain ATCC 33699 / Western), this protein is Trigger factor.